We begin with the raw amino-acid sequence, 441 residues long: Thymidine phosphorylase (441 aa).

It belongs to the thymidine/pyrimidine-nucleoside phosphorylase family. As to quaternary structure, homodimer.

The catalysed reaction is thymidine + phosphate = 2-deoxy-alpha-D-ribose 1-phosphate + thymine. It participates in pyrimidine metabolism; dTMP biosynthesis via salvage pathway; dTMP from thymine: step 1/2. The enzymes which catalyze the reversible phosphorolysis of pyrimidine nucleosides are involved in the degradation of these compounds and in their utilization as carbon and energy sources, or in the rescue of pyrimidine bases for nucleotide synthesis. The protein is Thymidine phosphorylase of Chromobacterium violaceum (strain ATCC 12472 / DSM 30191 / JCM 1249 / CCUG 213 / NBRC 12614 / NCIMB 9131 / NCTC 9757 / MK).